A 362-amino-acid chain; its full sequence is Porin Omp2b (362 aa).

A signal peptide spans 1 to 22; it reads MNIKSLLLGSAAALVAASGAQA.

It belongs to the alphaproteobacteria porin family. As to quaternary structure, homotrimer.

Its subcellular location is the cell outer membrane. Functionally, forms passive diffusion pores that allow small molecular weight hydrophilic materials across the outer membrane. The chain is Porin Omp2b (omp2b) from Brucella canis (strain ATCC 23365 / NCTC 10854 / RM-666).